The primary structure comprises 72 residues: Translation initiation factor IF-1 (72 aa).

The 72-residue stretch at 1–72 folds into the S1-like domain; that stretch reads MAKEEQIELE…TKGRITFRMK (72 aa).

This sequence belongs to the IF-1 family. In terms of assembly, component of the 30S ribosomal translation pre-initiation complex which assembles on the 30S ribosome in the order IF-2 and IF-3, IF-1 and N-formylmethionyl-tRNA(fMet); mRNA recruitment can occur at any time during PIC assembly.

Its subcellular location is the cytoplasm. In terms of biological role, one of the essential components for the initiation of protein synthesis. Stabilizes the binding of IF-2 and IF-3 on the 30S subunit to which N-formylmethionyl-tRNA(fMet) subsequently binds. Helps modulate mRNA selection, yielding the 30S pre-initiation complex (PIC). Upon addition of the 50S ribosomal subunit IF-1, IF-2 and IF-3 are released leaving the mature 70S translation initiation complex. In Alcanivorax borkumensis (strain ATCC 700651 / DSM 11573 / NCIMB 13689 / SK2), this protein is Translation initiation factor IF-1.